The following is a 300-amino-acid chain: GTPase Era (300 aa).

The region spanning 8-176 is the Era-type G domain; sequence RCGYVAIVGR…EAQIAKHLPE (169 aa). The segment at 16-23 is G1; the sequence is GRPNVGKS. 16–23 contributes to the GTP binding site; that stretch reads GRPNVGKS. The tract at residues 42-46 is G2; the sequence is QTTRH. The segment at 63-66 is G3; the sequence is DTPG. GTP is bound by residues 63–67 and 125–128; these read DTPGM and NKTD. The tract at residues 125–128 is G4; sequence NKTD. The tract at residues 155–157 is G5; that stretch reads ISA. Positions 199 to 283 constitute a KH type-2 domain; sequence VREKIMRQLG…MLNLWVKVKG (85 aa).

Belongs to the TRAFAC class TrmE-Era-EngA-EngB-Septin-like GTPase superfamily. Era GTPase family. In terms of assembly, monomer.

The protein resides in the cytoplasm. It is found in the cell inner membrane. In terms of biological role, an essential GTPase that binds both GDP and GTP, with rapid nucleotide exchange. Plays a role in 16S rRNA processing and 30S ribosomal subunit biogenesis and possibly also in cell cycle regulation and energy metabolism. The chain is GTPase Era from Pseudomonas putida (strain ATCC 700007 / DSM 6899 / JCM 31910 / BCRC 17059 / LMG 24140 / F1).